A 189-amino-acid chain; its full sequence is dCTP deaminase, dUMP-forming (189 aa).

Residues 101 to 106 (KSSLGR), Asp119, 127 to 129 (TLE), Gln148, Tyr162, and Gln174 each bind dCTP. Glu129 functions as the Proton donor/acceptor in the catalytic mechanism.

Belongs to the dCTP deaminase family. In terms of assembly, homotrimer.

The catalysed reaction is dCTP + 2 H2O = dUMP + NH4(+) + diphosphate. Its pathway is pyrimidine metabolism; dUMP biosynthesis; dUMP from dCTP: step 1/1. Its function is as follows. Bifunctional enzyme that catalyzes both the deamination of dCTP to dUTP and the hydrolysis of dUTP to dUMP without releasing the toxic dUTP intermediate. The protein is dCTP deaminase, dUMP-forming of Rhodococcus opacus (strain B4).